Reading from the N-terminus, the 246-residue chain is E3 ubiquitin-protein ligase MARCHF2 (246 aa).

An RING-CH-type zinc finger spans residues Gly-56–Glu-116. Cys-64, Cys-67, Cys-80, Cys-82, His-90, Cys-93, Cys-106, and Cys-109 together coordinate Zn(2+). The next 2 helical transmembrane spans lie at Leu-138–Leu-158 and Ala-175–Val-195.

It is found in the endoplasmic reticulum membrane. The protein resides in the lysosome membrane. The protein localises to the endosome membrane. It carries out the reaction S-ubiquitinyl-[E2 ubiquitin-conjugating enzyme]-L-cysteine + [acceptor protein]-L-lysine = [E2 ubiquitin-conjugating enzyme]-L-cysteine + N(6)-ubiquitinyl-[acceptor protein]-L-lysine.. It participates in protein modification; protein ubiquitination. E3 ubiquitin-protein ligase which may be involved in endosomal trafficking. E3 ubiquitin ligases accept ubiquitin from an E2 ubiquitin-conjugating enzyme in the form of a thioester and then directly transfer the ubiquitin to targeted substrates. This is E3 ubiquitin-protein ligase MARCHF2 (marchf2) from Xenopus tropicalis (Western clawed frog).